The chain runs to 592 residues: LIM domain-binding protein 1 (592 aa).

Disordered stretches follow at residues 14–41 and 305–368; these read GHPP…NSQN and PAPE…NPMT. Polar residues predominate over residues 23-41; sequence ESSNSHYGMPPSQGTNSQN. Low complexity predominate over residues 322-344; that stretch reads PAANPRGSKKATAAAAAAAAAAT. Polar residues predominate over residues 352 to 368; the sequence is PTASPANNQQFPPNPMT. The 40-residue stretch at 378–417 folds into the LIM interaction domain (LID) domain; it reads DVMVVGEPSMMGSEFGENDERTISRVENSQYDPNAMQMQS. Disordered stretches follow at residues 437-458 and 559-592; these read HHPG…MGSQ and GGMQ…MITG. Pro residues predominate over residues 577–586; the sequence is GPPPQWPPPN.

Belongs to the LDB family. Interacts with blmp-1. Expressed in all neurons and some other tissues of the adult, including vulval muscle, and, in males, all the neurons of the tail region. Expressed in vulval cells.

Its function is as follows. Binds to the LIM domain of LIM domain-containing transcription factors. Required for the blmp-1-mediated transcriptional activation or repression of several hypodermal genes, such as bed-3. Regulates sam-10 nuclear localization in PLM neurons. Has a role in synaptic differentiation of PLM mechanosensory neurons. Involved in gonadogenesis. This is LIM domain-binding protein 1 from Caenorhabditis elegans.